Reading from the N-terminus, the 579-residue chain is Plastidial pyruvate kinase 2 (579 aa).

The N-terminal 63 residues, 1 to 63 (MAQVVATRSI…SRRVVDTTVR (63 aa)), are a transit peptide targeting the chloroplast. The span at 6-24 (ATRSIQGSMLSPNGGSVST) shows a compositional bias: polar residues. The tract at residues 6–26 (ATRSIQGSMLSPNGGSVSTRS) is disordered. Arginine 140 is a binding site for substrate. Asparagine 142, serine 144, aspartate 175, and threonine 176 together coordinate K(+). 142–145 (NMSH) contacts ATP. Arginine 182 serves as a coordination point for ATP. Lysine 325 contributes to the substrate binding site. Glutamate 327 contributes to the Mg(2+) binding site. Residues glycine 350, aspartate 351, and threonine 383 each contribute to the substrate site. Position 351 (aspartate 351) interacts with Mg(2+).

This sequence belongs to the pyruvate kinase family. As to quaternary structure, oligomer of alpha and beta subunits. Mg(2+) serves as cofactor. Requires K(+) as cofactor. Mostly expressed in seeds, and, to a lower extent, in roots, leaves (veins and trichomes), inflorescences, siliques, pollen (grains and tubes) and flowers (sepals and petals).

It localises to the plastid. The protein resides in the chloroplast stroma. It is found in the mitochondrion. The enzyme catalyses pyruvate + ATP = phosphoenolpyruvate + ADP + H(+). Its pathway is carbohydrate degradation; glycolysis; pyruvate from D-glyceraldehyde 3-phosphate: step 5/5. Its function is as follows. Required for plastidial pyruvate kinase activity. Involved in seed oil accumulation, embryo development and seed storage compounds mobilization upon germination. The chain is Plastidial pyruvate kinase 2 (PKP2) from Arabidopsis thaliana (Mouse-ear cress).